The following is a 436-amino-acid chain: Capsid protein (436 aa).

The interval arginine 326–serine 370 is disordered. Residues glutamine 330–glutamate 344 are compositionally biased toward polar residues.

It belongs to the anelloviridae capsid protein family.

Its subcellular location is the virion. Functionally, self-assembles to form an icosahedral capsid with a T=1 symmetry, about 30 nm in diameter, and consisting of 60 capsid proteins. The capsid encapsulates the genomic DNA. Capsid protein is involved in attachment and entry into the host cell. The polypeptide is Capsid protein (Torque teno felis virus (isolate Fc-TTV4)).